A 405-amino-acid polypeptide reads, in one-letter code: L-rhamnonate dehydratase (405 aa).

Histidine 33 and arginine 59 together coordinate substrate. Aspartate 226, glutamate 252, and glutamate 280 together coordinate Mg(2+). Histidine 329 serves as the catalytic Proton acceptor. A substrate-binding site is contributed by glutamate 349.

The protein belongs to the mandelate racemase/muconate lactonizing enzyme family. RhamD subfamily. Homooctamer; tetramer of dimers. It depends on Mg(2+) as a cofactor.

It carries out the reaction L-rhamnonate = 2-dehydro-3-deoxy-L-rhamnonate + H2O. Catalyzes the dehydration of L-rhamnonate to 2-keto-3-deoxy-L-rhamnonate (KDR). The sequence is that of L-rhamnonate dehydratase from Salmonella typhi.